The following is a 1584-amino-acid chain: Dicer-like protein 1 (1584 aa).

Positions 31–60 (EDVVSDNDDRGNASDVESEDGVKRWTVNPE) are disordered. Positions 129-310 (LFERAKQQNT…RAAAELEALL (182 aa)) constitute a Helicase ATP-binding domain. 142–149 (LDTGSGKT) serves as a coordination point for ATP. The short motif at 255–258 (DEAH) is the DEAH box element. A Helicase C-terminal domain is found at 448 to 621 (KVIMLVRILR…EALPEDRKLT (174 aa)). In terms of domain architecture, Dicer dsRNA-binding fold spans 654–744 (SLVCLANFTA…QSVFTKQLPE (91 aa)). One can recognise a PAZ domain in the interval 894 to 1028 (KALAYVSENE…LILEPMRISP (135 aa)). RNase III domains follow at residues 1052–1207 (VALD…LTGQ) and 1258–1424 (AKKF…VDSE). Positions 1298, 1410, and 1413 each coordinate Mg(2+). In terms of domain architecture, DRBM spans 1458–1545 (TFVANMMAHK…AKKAIKLLEG (88 aa)). Residues Cys-1470, His-1516, Cys-1557, and Cys-1559 each contribute to the Zn(2+) site.

It belongs to the helicase family. Dicer subfamily. The cofactor is Mg(2+). Requires Mn(2+) as cofactor.

In terms of biological role, dicer-like endonuclease involved in cleaving double-stranded RNA in the RNA interference (RNAi) pathway. Produces 21 to 25 bp dsRNAs (siRNAs) which target the selective destruction of homologous RNAs leading to sequence-specific suppression of gene expression, called post-transcriptional gene silencing (PTGS). Part of a broad host defense response against viral infection and transposons. Controls the expression of the non-LTR retrotransposon Tad in the African strain, Adiomopoume. The protein is Dicer-like protein 1 (dcl-1) of Neurospora crassa (strain ATCC 24698 / 74-OR23-1A / CBS 708.71 / DSM 1257 / FGSC 987).